A 476-amino-acid chain; its full sequence is Replication factor C large subunit (476 aa).

G50–T57 is a binding site for ATP. A disordered region spans residues Y447 to D476. A compositionally biased stretch (basic residues) spans K452–K461.

This sequence belongs to the activator 1 small subunits family. RfcL subfamily. As to quaternary structure, heteromultimer composed of small subunits (RfcS) and large subunits (RfcL).

Part of the RFC clamp loader complex which loads the PCNA sliding clamp onto DNA. The sequence is that of Replication factor C large subunit from Ignicoccus hospitalis (strain KIN4/I / DSM 18386 / JCM 14125).